The following is a 492-amino-acid chain: Protein adenylyltransferase Fic (492 aa).

Low complexity predominate over residues 1–17 (MCTEAEQPSPPAQQQEQ). Positions 1–25 (MCTEAEQPSPPAQQQEQGNPPLCKA) are disordered. Residues 33-55 (LYRLVLLFVAGSLAAWTFHALSS) traverse the membrane as a helical segment. TPR repeat units lie at residues 118–151 (ALGALRMAQDLYLAGKDDKAARLFEHALALAPRH) and 152–186 (PEVLLRYGEFLEHNQRNIVLADQYYFQALTISPSN). Positions 243-248 (SVGIEG) match the Inhibitory (S/T)XXXE(G/N) motif motif. ATP is bound by residues Glu-247 and 328 to 331 (VGGH). The 136-residue stretch at 297–432 (ITIKDILELH…IRPFVRFIAD (136 aa)) folds into the Fido domain. Residue His-375 is part of the active site. ATP-binding positions include 379–386 (DGNGRTSR), 411–412 (YY), and Asn-419.

This sequence belongs to the fic family. As to quaternary structure, homodimer.

Its subcellular location is the membrane. The enzyme catalyses L-tyrosyl-[protein] + ATP = O-(5'-adenylyl)-L-tyrosyl-[protein] + diphosphate. It carries out the reaction L-threonyl-[protein] + ATP = 3-O-(5'-adenylyl)-L-threonyl-[protein] + diphosphate. The catalysed reaction is 3-O-(5'-adenylyl)-L-threonyl-[protein] + H2O = L-threonyl-[protein] + AMP + H(+). With respect to regulation, the side chain of Glu-247 determines which of the two opposing activities (AMPylase or de-AMPylase) will take place. In response to endoplasmic reticulum stress, mediates de-AMPylase activity. Adenylyltransferase activity is inhibited by the inhibitory helix present at the N-terminus: Glu-247 binds ATP and competes with ATP-binding at Arg-386, thereby preventing adenylyltransferase activity. In unstressed cells, disengagement of Glu-247 promotes adenylyltransferase activity. Activation dissociates ATP-binding from Glu-247, allowing ordered binding of the entire ATP moiety with the alpha-phosphate in an orientation that is productive for accepting an incoming target hydroxyl side chain. Its function is as follows. Protein that can both mediate the addition of adenosine 5'-monophosphate (AMP) to specific residues of target proteins (AMPylation), and the removal of the same modification from target proteins (de-AMPylation), depending on the context. The side chain of Glu-247 determines which of the two opposing activities (AMPylase or de-AMPylase) will take place. Acts as a key regulator of the unfolded protein response (UPR) by mediating AMPylation or de-AMPylation of Hsc70-3/BiP. In unstressed cells, acts as an adenylyltransferase by mediating AMPylation of Hsc70-3/BiP at 'Thr-518', thereby inactivating it. In response to endoplasmic reticulum stress, acts as a phosphodiesterase by mediating removal of ATP (de-AMPylation) from Hsc70-3/BiP at 'Thr-518', leading to restore HSPA5/BiP activity. This chain is Protein adenylyltransferase Fic, found in Drosophila sechellia (Fruit fly).